The following is a 629-amino-acid chain: Chaperone protein HtpG (629 aa).

An a; substrate-binding region spans residues 1 to 335 (MSEVETSVEK…TADLPLNVSR (335 aa)). The b stretch occupies residues 336–551 (EMIQESPLLA…EQGPDRQLQK (216 aa)). The segment at 552-629 (MLQDAGRIEG…SRVFGRALKE (78 aa)) is c.

It belongs to the heat shock protein 90 family. As to quaternary structure, homodimer.

The protein localises to the cytoplasm. Functionally, molecular chaperone. Has ATPase activity. The protein is Chaperone protein HtpG of Rhizobium meliloti (strain 1021) (Ensifer meliloti).